We begin with the raw amino-acid sequence, 125 residues long: Histone H2A.v3 (125 aa).

Belongs to the histone H2A family. The nucleosome is a histone octamer containing two molecules each of H2A, H2B, H3 and H4 assembled in one H3-H4 heterotetramer and two H2A-H2B heterodimers. The octamer wraps approximately 147 bp of DNA.

It localises to the nucleus. Its subcellular location is the chromosome. Its function is as follows. Core component of nucleosome which plays a central role in DNA double strand break (DSB) repair. Nucleosomes wrap and compact DNA into chromatin, limiting DNA accessibility to the cellular machineries which require DNA as a template. Histones thereby play a central role in transcription regulation, DNA repair, DNA replication and chromosomal stability. DNA accessibility is regulated via a complex set of post-translational modifications of histones, also called histone code, and nucleosome remodeling. The chain is Histone H2A.v3 (H2Av3) from Dictyostelium discoideum (Social amoeba).